A 130-amino-acid chain; its full sequence is Vascular-related unknown protein 3 (130 aa).

The tract at residues 45–81 (DDSSMMSDAASPMGCVEEDTASSPSNRTEGYSGMEDN) is disordered.

In terms of biological role, involved in the regulation of plant growth. The chain is Vascular-related unknown protein 3 from Arabidopsis thaliana (Mouse-ear cress).